Reading from the N-terminus, the 158-residue chain is Small ribosomal subunit protein uS7 (158 aa).

It belongs to the universal ribosomal protein uS7 family. Part of the 30S ribosomal subunit. Contacts proteins S9 and S11.

Its function is as follows. One of the primary rRNA binding proteins, it binds directly to 16S rRNA where it nucleates assembly of the head domain of the 30S subunit. Is located at the subunit interface close to the decoding center, probably blocks exit of the E-site tRNA. The chain is Small ribosomal subunit protein uS7 from Porphyromonas gingivalis (strain ATCC BAA-308 / W83).